The following is a 150-amino-acid chain: Large ribosomal subunit protein bL9 (150 aa).

This sequence belongs to the bacterial ribosomal protein bL9 family.

Its function is as follows. Binds to the 23S rRNA. In Pseudoalteromonas translucida (strain TAC 125), this protein is Large ribosomal subunit protein bL9.